Consider the following 698-residue polypeptide: Testis-specific gene 10 protein (698 aa).

The residue at position 163 (Ser-163) is a Phosphoserine. An interaction with HIF1A region spans residues 556 to 689 (QMANERISMQ…SPDRGLDRSL (134 aa)). A compositionally biased stretch (polar residues) spans 659 to 670 (HMSSTMKPNTKC). A disordered region spans residues 659–685 (HMSSTMKPNTKCHSPERAHHRSPDRGL). Positions 671-685 (HSPERAHHRSPDRGL) are enriched in basic and acidic residues. Ser-688 carries the post-translational modification Phosphoserine.

It belongs to the CEP135/TSGA10 family. Interacts with HIF1A. In terms of processing, processed into N-terminal 27-kDa and C-terminal 55-kDa fragments. In terms of tissue distribution, expressed in the testis, in spermatozoa (at protein level). Expressed in actively dividing fetal tissues, including sternum, intestine, limb, kidney and stomach.

It localises to the cytoplasm. It is found in the cytoskeleton. The protein localises to the microtubule organizing center. The protein resides in the centrosome. Its subcellular location is the centriole. Plays a role in spermatogenesis. When overexpressed, prevents nuclear localization of HIF1A. The sequence is that of Testis-specific gene 10 protein (TSGA10) from Homo sapiens (Human).